We begin with the raw amino-acid sequence, 1491 residues long: MIERGKYQSLTMINWNGFFARTFDIDNLVTTLSGGNGAGKSTTMAAFITALIPDQSLLHFRNTTEAGSSQASRDKGLYGKLQAGACYAALDVVNSRNQRLLFAVKLQQVAGRDKKVDIKPFLIQGLPSHVKPTDVLVETVSDKHARVRQINEVKDAVGQIEGAHFKSFPSIVDYHAQMFEFGVIPKKLRNSSDRSKFYRLIEASLYGGISSAITRSLRDYLLPQNGGVKKAFQDMESALRENRMTLEAIKTTQADRDLFKHLITESTNYVAADYMRHANDRRNKVGQTLVLRGELFSSRETLIEQNSLLNRVHEELELLVEQESALEQDYQGASDHLQLVQNALRQQEKIERYQEDLEELNFRLEEQMMVVEEANERVMMAEERATISEEEVDSLKSQLADYQQALDVQQTRALQYQQAVQALDKARRLLDKPELTAESAQALATQLKAEQETRTSELLALKHKLDMSSAAAQQFNHAFDLVKRVLGEVARSEASKQAQQVIRQAREAQNVLQNEAQWQAQQRDLERQLEQQRSVRELATQYHKQHMVALDDAATVELERERHSALLEELETEQENCREQRGQLRHQEQELQTQIARFESIAPAWIKANDALETLREQSGAELADSQSVMAHMQQVLELEKAQSMAKDKLAERRAKLDSEIERLASPGGSNDPRLKGLADTLGGVLLSEIYDDITIDDAPYFSAMYGPARHAIVVSDLSGIKEKLVELDDCPEDLYLIEGDVDAFDDSSFNAEELEGAVCVQLNQRQMRYSRFPAIPLFGRAAREQRLELLREERDDVVEQHAKASFDSQKLQRLYASFNQFVAMHLQVAFDADPEQALANARDKRNQLLRSISEFEAQEQQLRSQLQASKQALAALDKLAPQMGLLDEETLEARYQELEEKLQQLSEAKAFIAAHGRTISELEKVAAVLDADPEQFDALEQQYQQADQALQQLKAQIFALSDLLERRHHFAYSDSVDLLNQSSELSEQLKAKLVQAESERTRSREELKQAQAQLSQYNQLLASLKSSHQAKLETVQEFKQELQEFGVHADEGAIERAQRRRDELQERLHTSRSRKSEYERTITSTELEMKALVKRMKKVEKDYQDLRTFVVNAKAGWCSVLRLARQNDVERRLHKRELAYLSADELRSMSDKSLGALRLAVANNEDLRDALRQSEDNSRPERKVLFYIAVYQHLRERIRQDIIRTDDPVEAIEEMEVELARLTEELTQREQRLAISSDSVASIIRKTIQREQNRIRMLNQGLSNISFGQVNGVRLNVKVRESHEILLAGLSEQQAQHKDLFESARYTFSEAMAKLFQRVNPHIDMGQRSPQVLGEELLDYRNYLELSVEVNRGSDGWLQAESGALSTGEAIGTGQSILLMVVQSWEEESRRLRSKDIVPCRLLFLDEAARLDAKSIATLFELCERLDMQLLIAAPENISPEKGTTYKLVRKVFKDHEHVHVVGLRGFAQTEKPKTAEQKFAEELAGELTE.

Residue 34 to 41 (GGNGAGKS) participates in ATP binding. Coiled-coil stretches lie at residues 302-418 (LIEQ…QYQQ), 488-600 (EVAR…RFES), 638-666 (ELEK…RLAS), 781-806 (RAAR…AKAS), 836-1109 (EQAL…DLRT), and 1210-1239 (VEAI…ISSD). Residues 667–784 (PGGSNDPRLK…AIPLFGRAAR (118 aa)) form a flexible hinge region. The segment at 1059 to 1080 (QRRRDELQERLHTSRSRKSEYE) is disordered.

It belongs to the SMC family. MukB subfamily. In terms of assembly, homodimerization via its hinge domain. Binds to DNA via its C-terminal region. Interacts, and probably forms a ternary complex, with MukE and MukF via its C-terminal region. The complex formation is stimulated by calcium or magnesium. Interacts with tubulin-related protein FtsZ.

The protein resides in the cytoplasm. It is found in the nucleoid. In terms of biological role, plays a central role in chromosome condensation, segregation and cell cycle progression. Functions as a homodimer, which is essential for chromosome partition. Involved in negative DNA supercoiling in vivo, and by this means organize and compact chromosomes. May achieve or facilitate chromosome segregation by condensation DNA from both sides of a centrally located replisome during cell division. The chain is Chromosome partition protein MukB from Vibrio cholerae serotype O1 (strain ATCC 39541 / Classical Ogawa 395 / O395).